Here is a 1726-residue protein sequence, read N- to C-terminus: Protein Shroom2 (1726 aa).

Positions 79–159 constitute a PDZ domain; sequence AGGCYSYWRG…ILKMIVKRRN (81 aa). Disordered stretches follow at residues 294–373, 425–451, 657–676, and 697–785; these read DNTK…RSDS, RTVA…LSPY, FSQL…DYSW, and EGRN…STYR. Polar residues predominate over residues 318-328; it reads VLQSTSINETS. The span at 329–338 shows a compositional bias: basic and acidic residues; it reads KIQRTEDNTE. Residues 657 to 667 show a composition bias toward basic and acidic residues; that stretch reads FSQLDHSEKGS. Polar residues-rich tracts occupy residues 746–755 and 769–785; these read SKSTAALTES and LESM…STYR. One can recognise an ASD1 domain in the interval 788-877; that stretch reads LQEAQARVLR…SEPEKINEVG (90 aa). Disordered stretches follow at residues 913-968, 1007-1080, 1092-1120, 1166-1240, 1269-1299, and 1471-1499; these read PKVP…DKVT, LDAD…QCGA, KWKP…GTLP, FKKR…KNPS, SSKS…DKPP, and AQQR…VPSA. Residues 917-926 show a composition bias toward low complexity; that stretch reads PKVVSSSQSE. The segment covering 936–948 has biased composition (basic and acidic residues); the sequence is DYAKSSEGQESKR. Polar residues-rich tracts occupy residues 1054 to 1070 and 1104 to 1119; these read NSNS…SPTR and ETSN…SGTL. A compositionally biased stretch (low complexity) spans 1191–1205; it reads SSSSLATSSESLLTA. A compositionally biased stretch (polar residues) spans 1209 to 1235; it reads RAQSYSPSSQDTFPPQSLQKQSPSTYP. The 295-residue stretch at 1427-1721 folds into the ASD2 domain; the sequence is EELVREIVDK…QLKCLTDSLP (295 aa).

This sequence belongs to the shroom family. As to quaternary structure, interacts with F-actin.

It localises to the apical cell membrane. The protein localises to the cell junction. It is found in the tight junction. Its subcellular location is the cytoplasm. The protein resides in the cytoskeleton. May be involved in endothelial cell morphology changes during cell spreading. Required for eye pigmentation. In the retinal pigment epithelium, regulates the biogenesis of melanosomes and promotes their association with the apical cell surface by inducing gamma-tubulin redistribution. This is Protein Shroom2 (shroom2) from Xenopus tropicalis (Western clawed frog).